We begin with the raw amino-acid sequence, 173 residues long: Mediator of RNA polymerase II transcription subunit 19 (173 aa).

The tract at residues 139–173 (LMRGDDMSENDEFGARRSKRKKKAQNGTDSKRQHI) is disordered.

It belongs to the Mediator complex subunit 19 family. Component of the Mediator complex.

It is found in the nucleus. In terms of biological role, component of the Mediator complex, a coactivator involved in the regulated transcription of nearly all RNA polymerase II-dependent genes. Mediator functions as a bridge to convey information from gene-specific regulatory proteins to the basal RNA polymerase II transcription machinery. Mediator is recruited to promoters by direct interactions with regulatory proteins and serves as a scaffold for the assembly of a functional preinitiation complex with RNA polymerase II and the general transcription factors. The sequence is that of Mediator of RNA polymerase II transcription subunit 19 (ROX3) from Scheffersomyces stipitis (strain ATCC 58785 / CBS 6054 / NBRC 10063 / NRRL Y-11545) (Yeast).